A 211-amino-acid polypeptide reads, in one-letter code: ATP phosphoribosyltransferase (211 aa).

Belongs to the ATP phosphoribosyltransferase family. Short subfamily. Heteromultimer composed of HisG and HisZ subunits.

The protein resides in the cytoplasm. It carries out the reaction 1-(5-phospho-beta-D-ribosyl)-ATP + diphosphate = 5-phospho-alpha-D-ribose 1-diphosphate + ATP. Its pathway is amino-acid biosynthesis; L-histidine biosynthesis; L-histidine from 5-phospho-alpha-D-ribose 1-diphosphate: step 1/9. Its function is as follows. Catalyzes the condensation of ATP and 5-phosphoribose 1-diphosphate to form N'-(5'-phosphoribosyl)-ATP (PR-ATP). Has a crucial role in the pathway because the rate of histidine biosynthesis seems to be controlled primarily by regulation of HisG enzymatic activity. In Pseudomonas putida (strain W619), this protein is ATP phosphoribosyltransferase.